We begin with the raw amino-acid sequence, 443 residues long: C4-dicarboxylate transport protein (443 aa).

9 helical membrane passes run 17-37 (PFYS…ILLG), 57-77 (LVKM…IAGM), 92-112 (LYFL…ANVV), 139-159 (EQSI…GAFA), 161-181 (GDIL…AMVG), 201-221 (LVAI…AFTI), 234-254 (MLIG…LGAV), 320-340 (IYMT…LSWG), and 368-388 (AATL…ILGI).

It belongs to the dicarboxylate/amino acid:cation symporter (DAACS) (TC 2.A.23) family.

It localises to the cell inner membrane. Its function is as follows. Responsible for the transport of dicarboxylates such as succinate, fumarate, and malate from the periplasm across the membrane. This chain is C4-dicarboxylate transport protein, found in Rhizobium leguminosarum bv. trifolii (strain WSM2304).